The primary structure comprises 142 residues: Hemoglobin subunit alpha (142 aa).

A Globin domain is found at 2–142; it reads VLSPADKSNV…VSTVLTSKYR (141 aa). At serine 4 the chain carries Phosphoserine. Residues lysine 8 and lysine 12 each carry the N6-succinyllysine modification. At lysine 17 the chain carries N6-acetyllysine; alternate. Lysine 17 carries the N6-succinyllysine; alternate modification. Phosphotyrosine is present on tyrosine 25. Serine 36 bears the Phosphoserine mark. The residue at position 41 (lysine 41) is an N6-succinyllysine. Serine 50 bears the Phosphoserine mark. Position 59 (histidine 59) interacts with O2. Position 88 (histidine 88) interacts with heme b. Phosphoserine is present on serine 103. Threonine 109 carries the post-translational modification Phosphothreonine. Serine 125 is subject to Phosphoserine. Threonine 135 and threonine 138 each carry phosphothreonine. The residue at position 139 (serine 139) is a Phosphoserine.

The protein belongs to the globin family. In terms of assembly, heterotetramer of two alpha chains and two beta chains. In terms of tissue distribution, red blood cells.

Its function is as follows. Involved in oxygen transport from the lung to the various peripheral tissues. In terms of biological role, hemopressin acts as an antagonist peptide of the cannabinoid receptor CNR1. Hemopressin-binding efficiently blocks cannabinoid receptor CNR1 and subsequent signaling. The sequence is that of Hemoglobin subunit alpha (HBA) from Ursus maritimus (Polar bear).